We begin with the raw amino-acid sequence, 187 residues long: Elongation factor P (187 aa).

Belongs to the elongation factor P family.

The protein resides in the cytoplasm. It participates in protein biosynthesis; polypeptide chain elongation. Its function is as follows. Involved in peptide bond synthesis. Stimulates efficient translation and peptide-bond synthesis on native or reconstituted 70S ribosomes in vitro. Probably functions indirectly by altering the affinity of the ribosome for aminoacyl-tRNA, thus increasing their reactivity as acceptors for peptidyl transferase. This Mycolicibacterium smegmatis (strain ATCC 700084 / mc(2)155) (Mycobacterium smegmatis) protein is Elongation factor P.